Consider the following 368-residue polypeptide: tRNA(Met) cytidine acetate ligase (368 aa).

ATP is bound by residues 7-20 (IAEFNPFHNGHKYL), Gly96, Asn152, and Arg175.

This sequence belongs to the TmcAL family.

It localises to the cytoplasm. The enzyme catalyses cytidine(34) in elongator tRNA(Met) + acetate + ATP = N(4)-acetylcytidine(34) in elongator tRNA(Met) + AMP + diphosphate. Catalyzes the formation of N(4)-acetylcytidine (ac(4)C) at the wobble position of elongator tRNA(Met), using acetate and ATP as substrates. First activates an acetate ion to form acetyladenylate (Ac-AMP) and then transfers the acetyl group to tRNA to form ac(4)C34. The protein is tRNA(Met) cytidine acetate ligase of Streptococcus pyogenes serotype M1.